We begin with the raw amino-acid sequence, 91 residues long: UPF0335 protein BRADO1188 (91 aa).

Belongs to the UPF0335 family.

The protein is UPF0335 protein BRADO1188 of Bradyrhizobium sp. (strain ORS 278).